A 192-amino-acid chain; its full sequence is C-X-C chemokine receptor type 4 (192 aa).

Sulfotyrosine is present on tyrosine 1. The important for chemokine binding and signaling stretch occupies residues 1–11 (YTEDDLGSGDY). Residues 1-28 (YTEDDLGSGDYDSMKEPCFREENAHFNR) lie on the Extracellular side of the membrane. Serine 8 is a glycosylation site (O-linked (Xyl...) (chondroitin sulfate) serine). Residue tyrosine 11 is modified to Sulfotyrosine. A helical membrane pass occupies residues 29–53 (IFLPTVYSIIFLTGIVGNGLVILVM). Residues 54-67 (GYQKKLRSMTDKYR) lie on the Cytoplasmic side of the membrane. A helical transmembrane segment spans residues 68–89 (LHLSVADLLFVLTLPFWAVDAV). Residues 84–87 (WAVD) form a chemokine binding region. The Extracellular portion of the chain corresponds to 90–100 (ANWYFGQFLCK). Cysteine 99 and cysteine 176 form a disulfide bridge. The chain crosses the membrane as a helical span at residues 101 to 120 (AVHVIYTVNLYSSVLILAFI). The interval 103–107 (HVIYT) is chemokine binding. Residues 121 to 144 (SLDRYLAIVHATNSQRPRKLLAEK) lie on the Cytoplasmic side of the membrane. The Important for signaling signature appears at 123-125 (DRY). An involved in dimerization; when bound to chemokine region spans residues 125 to 137 (YLAIVHATNSQRP). A helical membrane pass occupies residues 145–164 (VVYVGVWLPAVLLTIPDLIF). At 165 to 185 (ADIKEADERYICDRFYPSDLW) the chain is on the extracellular side. The segment at 176-180 (CDRFY) is chemokine binding, important for signaling. Residues 186–192 (LVVFQFQ) traverse the membrane as a helical segment.

The protein belongs to the G-protein coupled receptor 1 family. Monomer. Can form homodimers. Interacts with CD164. Interacts with ARRB2; the interaction is dependent on the C-terminal phosphorylation of CXCR4 and allows activation of MAPK1 and MAPK3. Interacts with ARR3; the interaction is dependent on the C-terminal phosphorylation of CXCR4 and modulates calcium mobilization. Interacts with RNF113A; the interaction, enhanced by CXCL12, promotes CXCR4 ubiquitination and subsequent degradation. Interacts (via the cytoplasmic C-terminal) with ITCH (via the WW domains I and II); the interaction, enhanced by CXCL12, promotes CXCR4 ubiquitination and leads to its degradation. Interacts with extracellular ubiquitin. Interacts with DBN1; this interaction is enhanced by antigenic stimulation. Following LPS binding, may form a complex with GDF5, HSP90AA1 and HSPA8. Post-translationally, phosphorylated on agonist stimulation. Rapidly phosphorylated on serine and threonine residues in the C-terminal. Ubiquitinated after ligand binding, leading to its degradation. Ubiquitinated by ITCH at the cell membrane on agonist stimulation. The ubiquitin-dependent mechanism, endosomal sorting complex required for transport (ESCRT), then targets CXCR4 for lysosomal degradation. This process is dependent also on prior Ser-/Thr-phosphorylation in the C-terminal of CXCR4. Also binding of ARRB1 to STAM negatively regulates CXCR4 sorting to lysosomes though modulating ubiquitination of SFR5S. In terms of processing, sulfation is required for efficient binding of CXCL12/SDF-1alpha and promotes its dimerization. Post-translationally, O- and N-glycosylated. N-glycosylation can mask coreceptor function. The O-glycosylation chondroitin sulfate attachment does not affect interaction with CXCL12/SDF-1alpha nor its coreceptor activity.

It is found in the cell membrane. It localises to the cell junction. The protein resides in the early endosome. The protein localises to the late endosome. Its subcellular location is the lysosome. Receptor for the C-X-C chemokine CXCL12/SDF-1 that transduces a signal by increasing intracellular calcium ion levels and enhancing MAPK1/MAPK3 activation. Involved in the AKT signaling cascade. Plays a role in regulation of cell migration, e.g. during wound healing. Acts as a receptor for extracellular ubiquitin; leading to enhanced intracellular calcium ions and reduced cellular cAMP levels. Binds bacterial lipopolysaccharide (LPS) et mediates LPS-induced inflammatory response, including TNF secretion by monocytes. Involved in hematopoiesis and in cardiac ventricular septum formation. Also plays an essential role in vascularization of the gastrointestinal tract, probably by regulating vascular branching and/or remodeling processes in endothelial cells. Involved in cerebellar development. In the CNS, could mediate hippocampal-neuron survival. The sequence is that of C-X-C chemokine receptor type 4 (CXCR4) from Ovis aries (Sheep).